A 178-amino-acid polypeptide reads, in one-letter code: Enhancer of split m5 protein (178 aa).

In terms of domain architecture, bHLH spans 18–73 (YLKVKKPLLERQRRARMNKCLDTLKTLVAEFQGDDAILRMDKAEMLEAALVFMRKQ). Positions 89–122 (FKNGYMNAVSEISRVMACTPAMSVDVGKTVMTHL) constitute an Orange domain. Polar residues predominate over residues 135-165 (VQTSVTTSTPRPLSPASSGYHSDNEDSQSAA). Residues 135–178 (VQTSVTTSTPRPLSPASSGYHSDNEDSQSAASPKPVEETMWRPW) form a disordered region. The segment covering 169–178 (PVEETMWRPW) has biased composition (basic and acidic residues). The short motif at 175–178 (WRPW) is the WRPW motif element.

As to quaternary structure, transcription repression requires formation of a complex with a corepressor protein (Groucho). Forms homodimers.

Its subcellular location is the nucleus. Its function is as follows. Participates in the control of cell fate choice by uncommitted neuroectodermal cells in the embryo. Transcriptional repressor. Binds DNA on N-box motifs: 5'-CACNAG-3'. The sequence is that of Enhancer of split m5 protein from Drosophila melanogaster (Fruit fly).